A 618-amino-acid chain; its full sequence is Glutathione-regulated potassium-efflux system protein (618 aa).

12 consecutive transmembrane segments (helical) span residues 6–26 (NPELMKVVILLASSVTIVPLF), 32–52 (GSVLGYLVAGCLIGPSVFGIV), 55–75 (PTAVVHLAELGVVMFLFIIGL), 94–114 (LLQVGLCGCLLTFSGIYLLGL), 118–138 (VSFIAGMGFTLSSTAIVMQSL), 152–172 (VISTLIFEDIAIVPLLASVAF), 186–206 (WVSIGIALSAVVGLIVTGKWL), 227–247 (ALLVVLGAALAMEIGGLSMAM), 274–294 (GLLLGLFFMGVGMSLDLHLVF), 298–318 (ILLLGIVFLYILGKASAVYII), 336–356 (MAHGGEFAFVLFSAAATAEVI), and 362–382 (ATFTAAVIISMLFSPIIAQIA). The RCK N-terminal domain occupies 409–525 (EDNVLVIGFG…LIKQDVDFIV (117 aa)).

This sequence belongs to the monovalent cation:proton antiporter 2 (CPA2) transporter (TC 2.A.37) family.

Its subcellular location is the cell inner membrane. Transport system that facilitate potassium-efflux, possibly by potassium-proton antiport. The polypeptide is Glutathione-regulated potassium-efflux system protein (kefBC) (Haemophilus influenzae (strain ATCC 51907 / DSM 11121 / KW20 / Rd)).